The sequence spans 155 residues: SsrA-binding protein (155 aa).

The tract at residues 135 to 155 (KRQDIKQRDVERETRREIMRH) is disordered.

It belongs to the SmpB family.

It localises to the cytoplasm. Its function is as follows. Required for rescue of stalled ribosomes mediated by trans-translation. Binds to transfer-messenger RNA (tmRNA), required for stable association of tmRNA with ribosomes. tmRNA and SmpB together mimic tRNA shape, replacing the anticodon stem-loop with SmpB. tmRNA is encoded by the ssrA gene; the 2 termini fold to resemble tRNA(Ala) and it encodes a 'tag peptide', a short internal open reading frame. During trans-translation Ala-aminoacylated tmRNA acts like a tRNA, entering the A-site of stalled ribosomes, displacing the stalled mRNA. The ribosome then switches to translate the ORF on the tmRNA; the nascent peptide is terminated with the 'tag peptide' encoded by the tmRNA and targeted for degradation. The ribosome is freed to recommence translation, which seems to be the essential function of trans-translation. In Oleidesulfovibrio alaskensis (strain ATCC BAA-1058 / DSM 17464 / G20) (Desulfovibrio alaskensis), this protein is SsrA-binding protein.